Reading from the N-terminus, the 201-residue chain is Endoribonuclease YbeY (201 aa).

His-120, His-124, and His-130 together coordinate Zn(2+). Residues Asp-151–Arg-201 are disordered. The segment covering Gly-173–Gln-186 has biased composition (basic and acidic residues).

This sequence belongs to the endoribonuclease YbeY family. Zn(2+) serves as cofactor.

The protein localises to the cytoplasm. In terms of biological role, single strand-specific metallo-endoribonuclease involved in late-stage 70S ribosome quality control and in maturation of the 3' terminus of the 16S rRNA. The protein is Endoribonuclease YbeY of Frankia casuarinae (strain DSM 45818 / CECT 9043 / HFP020203 / CcI3).